Reading from the N-terminus, the 379-residue chain is Acetylajmalan esterase 1 (379 aa).

Positions 1-20 (MGFAPLLVFSLFVFAGTTKG) are cleaved as a signal peptide. S34 functions as the Nucleophile in the catalytic mechanism. N-linked (GlcNAc...) asparagine glycosylation is found at N96, N178, N197, and N291. Catalysis depends on residues D332 and H335.

This sequence belongs to the 'GDSL' lipolytic enzyme family. In terms of tissue distribution, expressed in roots and leaves at low levels.

It catalyses the reaction 17-O-acetylnorajmaline + H2O = norajmaline + acetate + H(+). It carries out the reaction 17-O-acetylajmaline + H2O = ajmaline + acetate + H(+). It participates in alkaloid biosynthesis; ajmaline biosynthesis. Acetylesterase involved in the biosynthesis of ajmaline-type monoterpenoid indole alkaloids (MIAs) natural products, important plant-derived pharmaceuticals used in the therapy of heart disorders. Deacetylates 17-O-acetylnorajmaline to produce norajmaline. May also catalyze the conversion of 17-O-acetylajmaline to ajmaline. The chain is Acetylajmalan esterase 1 from Rauvolfia serpentina (Serpentine wood).